A 343-amino-acid chain; its full sequence is Cilia- and flagella-associated protein 36 (343 aa).

Phosphoserine occurs at positions 85 and 147. Positions 147–181 (SDLEQEEMKILREVLRKSKEEYDQEEERKRKKQSS) form a coiled coil. Residues 165 to 191 (KEEYDQEEERKRKKQSSEGKMEEPPIY) form a disordered region. Ser201 carries the post-translational modification Phosphoserine. The segment at 286–323 (SMRKDMRAKQIQNTEQKGKPTREAEEMTEKPEMTAEEK) is disordered. Over residues 301–323 (QKGKPTREAEEMTEKPEMTAEEK) the composition is skewed to basic and acidic residues.

This sequence belongs to the CFAP36 family. As to quaternary structure, interacts with ARL3. In terms of tissue distribution, widely expressed (at protein level).

The protein resides in the nucleus. It localises to the cytoplasm. It is found in the cell projection. The protein localises to the cilium. Its subcellular location is the flagellum. Functionally, may act as an effector for ARL3. The chain is Cilia- and flagella-associated protein 36 from Rattus norvegicus (Rat).